A 2552-amino-acid polypeptide reads, in one-letter code: Protein TIC 214 (2552 aa).

The next 6 helical transmembrane spans lie at 15-35 (LIFGIFYGILITFSKLTSYLF), 54-74 (LSYGFTVGHLLGYLLIYYLPF), 78-98 (LSNFYLKIILALGLMLYQFFW), 119-136 (TLAFVYGLSYRLLNYTFF), 154-174 (FKILFLYTTFFVWMIGHLICI), and 243-263 (ILATILFIVALYLLGKSPIPF). Residues 304 to 325 (EEQKKDEKSADEEKKRAVEEEN) form a disordered region. Residues 305 to 322 (EQKKDEKSADEEKKRAVE) are compositionally biased toward basic and acidic residues. Helical transmembrane passes span 362-382 (TLYTFFSDCFFESFSFYAFLF), 423-443 (PFLVVVKPFYLYFFNFFSVYI), and 452-472 (FLFNHNFVFSAIFRGFSHFFF). The disordered stretch occupies residues 2045 to 2077 (MKAEEQKKIDEEYEEKKEKRKKEQEEQGKAFDE). Residues 2416 to 2511 (RRRRQLRIVN…IKKKLMRLRF (96 aa)) are a coiled coil.

The protein belongs to the TIC214 family. As to quaternary structure, part of the Tic complex.

The protein resides in the plastid. It is found in the chloroplast inner membrane. In terms of biological role, involved in protein precursor import into chloroplasts. May be part of an intermediate translocation complex acting as a protein-conducting channel at the inner envelope. This chain is Protein TIC 214, found in Pelargonium hortorum (Common geranium).